The primary structure comprises 149 residues: Transcriptional repressor NrdR (149 aa).

A zinc finger lies at 3 to 34 (CPFCSAVDTKVIDSRLVGEGTQVRRRRQCVIC). Positions 49 to 139 (PRVIKSNDVR…VYRSFEDIRE (91 aa)) constitute an ATP-cone domain.

This sequence belongs to the NrdR family. Zn(2+) is required as a cofactor.

Its function is as follows. Negatively regulates transcription of bacterial ribonucleotide reductase nrd genes and operons by binding to NrdR-boxes. The sequence is that of Transcriptional repressor NrdR from Sodalis glossinidius (strain morsitans).